A 703-amino-acid polypeptide reads, in one-letter code: MPSSPSRSILRGLTVSEICKFIPQSWKQLPRPISETSKTHDDESVPQVLFNSFRHCISHGQLYEAFRTFSLLRYQSGSHEFVLYSSASLLSTCVGFNEFVPGQQLHAHCISSGLEFDSVLVPKLVTFYSAFNLLDEAQTITENSEILHPLPWNVLIGSYIRNKRFQESVSVYKRMMSKGIRADEFTYPSVIKACAALLDFAYGRVVHGSIEVSSHRCNLYVCNALISMYKRFGKVDVARRLFDRMSERDAVSWNAIINCYTSEEKLGEAFKLLDRMYLSGVEASIVTWNTIAGGCLEAGNYIGALNCVVGMRNCNVRIGSVAMINGLKACSHIGALKWGKVFHCLVIRSCSFSHDIDNVRNSLITMYSRCSDLRHAFIVFQQVEANSLSTWNSIISGFAYNERSEETSFLLKEMLLSGFHPNHITLASILPLFARVGNLQHGKEFHCYILRRQSYKDCLILWNSLVDMYAKSGEIIAAKRVFDSMRKRDKVTYTSLIDGYGRLGKGEVALAWFKDMDRSGIKPDHVTMVAVLSACSHSNLVREGHWLFTKMEHVFGIRLRLEHYSCMVDLYCRAGYLDKARDIFHTIPYEPSSAMCATLLKACLIHGNTNIGEWAADKLLLETKPEHLGHYMLLADMYAVTGSWSKLVTVKTLLSDLGVQKAHEFALMETDSELDGENNKPMNDDSVINQEQSSDEERLVEVG.

PPR repeat units lie at residues 82-116 (VLYS…GLEF), 117-147 (DSVL…SEIL), 148-182 (HPLP…GIRA), 183-217 (DEFT…SHRC), 218-248 (NLYV…MSER), 249-283 (DAVS…GVEA), 284-318 (SIVT…NVRI), 319-353 (GSVA…CSFS), 356-386 (IDNV…VEAN), 387-421 (SLST…GFHP), 422-452 (NHIT…ILRR), 458-488 (CLIL…MRKR), 489-523 (DKVT…GIKP), 524-554 (DHVT…MEHV), and 560-594 (RLEH…PSSA). The interval 595-671 (MCATLLKACL…AHEFALMETD (77 aa)) is type E motif. Residues 671-703 (DSELDGENNKPMNDDSVINQEQSSDEERLVEVG) are disordered.

Belongs to the PPR family. PCMP-E subfamily.

This Arabidopsis thaliana (Mouse-ear cress) protein is Pentatricopeptide repeat-containing protein At1g22830 (PCMP-E24).